Here is a 61-residue protein sequence, read N- to C-terminus: Ferredoxin-2 (61 aa).

2 4Fe-4S ferredoxin-type domains span residues His2–Asp27 and Glu28–Val61. [4Fe-4S] cluster is bound by residues Cys8, Cys11, Cys14, Cys18, Cys37, Cys40, Cys49, and Cys53.

[4Fe-4S] cluster is required as a cofactor.

Its function is as follows. Ferredoxins are iron-sulfur proteins that transfer electrons in a wide variety of metabolic reactions. This is Ferredoxin-2 from Chlorobium limicola.